Consider the following 360-residue polypeptide: Protein Wnt-2 (360 aa).

The N-terminal stretch at 1 to 25 (MNAPLGGIWLWLPLLLTWLTPEVNS) is a signal peptide. 11 disulfides stabilise this stretch: Cys-76/Cys-87, Cys-127/Cys-135, Cys-137/Cys-157, Cys-206/Cys-220, Cys-208/Cys-215, Cys-278/Cys-309, Cys-294/Cys-304, Cys-308/Cys-348, Cys-324/Cys-339, Cys-326/Cys-336, and Cys-331/Cys-332. Ser-212 carries the O-palmitoleoyl serine; by PORCN lipid modification. A glycan (N-linked (GlcNAc...) asparagine) is linked at Asn-295.

This sequence belongs to the Wnt family. In terms of processing, palmitoleoylation is required for efficient binding to frizzled receptors. Depalmitoleoylation leads to Wnt signaling pathway inhibition. In terms of tissue distribution, expressed in brain in the thalamus, in fetal and adult lung and in placenta.

It is found in the secreted. Its subcellular location is the extracellular space. The protein resides in the extracellular matrix. Functionally, ligand for members of the frizzled family of seven transmembrane receptors. Functions in the canonical Wnt signaling pathway that results in activation of transcription factors of the TCF/LEF family. Functions as a upstream regulator of FGF10 expression. Plays an important role in embryonic lung development. May contribute to embryonic brain development by regulating the proliferation of dopaminergic precursors and neurons. The chain is Protein Wnt-2 (WNT2) from Homo sapiens (Human).